A 270-amino-acid polypeptide reads, in one-letter code: Orotidine 5'-phosphate decarboxylase (270 aa).

Residue Lys-89 is the Proton donor of the active site.

This sequence belongs to the OMP decarboxylase family. Type 2 subfamily.

The catalysed reaction is orotidine 5'-phosphate + H(+) = UMP + CO2. Its pathway is pyrimidine metabolism; UMP biosynthesis via de novo pathway; UMP from orotate: step 2/2. This is Orotidine 5'-phosphate decarboxylase from Dehalococcoides mccartyi (strain ATCC BAA-2100 / JCM 16839 / KCTC 5957 / BAV1).